The primary structure comprises 610 residues: All-trans-retinol 13,14-reductase (610 aa).

The signal sequence occupies residues 1-18 (MWLPLVLLLAVLLLAVLC).

The protein belongs to the carotenoid/retinoid oxidoreductase family. CrtISO subfamily. The cofactor is NAD(+). Requires NADP(+) as cofactor. FAD is required as a cofactor. Expressed in liver; expression positively correlates with obesity and liver steatosis. Expressed in adipose tissue; expression tends to be decreased in obese versus lean individuals.

The protein localises to the endoplasmic reticulum membrane. The enzyme catalyses all-trans-13,14-dihydroretinol + A = all-trans-retinol + AH2. In terms of biological role, catalyzes the saturation of all-trans-retinol to all-trans-13,14-dihydroretinol. Does not exhibit any activity toward all-trans-retinoic acid, nor 9-cis, 11-cis or 13-cis-retinol isomers. May play a role in the metabolism of vitamin A. Independently of retinol conversion, may regulate liver metabolism upstream of MLXIPL/ChREBP. May play a role in adipocyte differentiation. The sequence is that of All-trans-retinol 13,14-reductase (RETSAT) from Homo sapiens (Human).